The sequence spans 134 residues: Iron-sulfur cluster insertion protein ErpA (134 aa).

Positions 47, 126, and 128 each coordinate iron-sulfur cluster.

It belongs to the HesB/IscA family. As to quaternary structure, homodimer. Requires iron-sulfur cluster as cofactor.

In terms of biological role, required for insertion of 4Fe-4S clusters for at least IspG. In Coxiella burnetii (strain RSA 331 / Henzerling II), this protein is Iron-sulfur cluster insertion protein ErpA.